A 126-amino-acid chain; its full sequence is S-adenosylmethionine decarboxylase proenzyme (126 aa).

Residue serine 63 is the Schiff-base intermediate with substrate; via pyruvic acid of the active site. Serine 63 bears the Pyruvic acid (Ser); by autocatalysis mark. Histidine 68 serves as the catalytic Proton acceptor; for processing activity. The active-site Proton donor; for catalytic activity is cysteine 83.

Belongs to the prokaryotic AdoMetDC family. Type 1 subfamily. In terms of assembly, heterotetramer of two alpha and two beta chains arranged as a dimer of alpha/beta heterodimers. Pyruvate is required as a cofactor. In terms of processing, is synthesized initially as an inactive proenzyme. Formation of the active enzyme involves a self-maturation process in which the active site pyruvoyl group is generated from an internal serine residue via an autocatalytic post-translational modification. Two non-identical subunits are generated from the proenzyme in this reaction, and the pyruvate is formed at the N-terminus of the alpha chain, which is derived from the carboxyl end of the proenzyme. The post-translation cleavage follows an unusual pathway, termed non-hydrolytic serinolysis, in which the side chain hydroxyl group of the serine supplies its oxygen atom to form the C-terminus of the beta chain, while the remainder of the serine residue undergoes an oxidative deamination to produce ammonia and the pyruvoyl group blocking the N-terminus of the alpha chain.

The enzyme catalyses S-adenosyl-L-methionine + H(+) = S-adenosyl 3-(methylsulfanyl)propylamine + CO2. It functions in the pathway amine and polyamine biosynthesis; S-adenosylmethioninamine biosynthesis; S-adenosylmethioninamine from S-adenosyl-L-methionine: step 1/1. In terms of biological role, catalyzes the decarboxylation of S-adenosylmethionine to S-adenosylmethioninamine (dcAdoMet), the propylamine donor required for the synthesis of the polyamines spermine and spermidine from the diamine putrescine. This is S-adenosylmethionine decarboxylase proenzyme from Oceanobacillus iheyensis (strain DSM 14371 / CIP 107618 / JCM 11309 / KCTC 3954 / HTE831).